The sequence spans 194 residues: MGIIFSNPIERTDKTLIESLRGRNMDLPGGGDLWIFANAGTSTMKFTTAGSRTSIQMYRVGRARTDGLTREFVILKGQDGNIYGVENASCIHFMSQNLHEFICKTGISQRDLMVTMGTFGGYKLNSPPKRYHKYHDSSLGRRRGISVDRSANTASCTQYEHEWSASGVLSTINPNDRILSHGSSKVRFGPTTVD.

This is an uncharacterized protein from Gallus gallus (Chicken).